The primary structure comprises 413 residues: Putative competence-damage inducible protein (413 aa).

This sequence belongs to the CinA family.

The chain is Putative competence-damage inducible protein from Acetivibrio thermocellus (strain ATCC 27405 / DSM 1237 / JCM 9322 / NBRC 103400 / NCIMB 10682 / NRRL B-4536 / VPI 7372) (Clostridium thermocellum).